A 159-amino-acid polypeptide reads, in one-letter code: MIEGVMKEGFITTSYDSVVNWAKTGSLWPMTFGLACCAVEMMHAAAARYDIGRFGAEVFRASPRQSDLMIVAGTLCNKMAPALRKVYDQMSEPRWVISMGSCANGGGYYHYSYSVVRGCDRIVPVDVYVPGCPPTAEALIYGIIQLQQKIRRTHTIARV.

4 residues coordinate [4Fe-4S] cluster: C36, C37, C102, and C132.

It belongs to the complex I 20 kDa subunit family. In terms of assembly, NDH-1 is composed of 14 different subunits. Subunits NuoB, C, D, E, F, and G constitute the peripheral sector of the complex. It depends on [4Fe-4S] cluster as a cofactor.

The protein localises to the cell inner membrane. The catalysed reaction is a quinone + NADH + 5 H(+)(in) = a quinol + NAD(+) + 4 H(+)(out). Functionally, NDH-1 shuttles electrons from NADH, via FMN and iron-sulfur (Fe-S) centers, to quinones in the respiratory chain. Couples the redox reaction to proton translocation (for every two electrons transferred, four hydrogen ions are translocated across the cytoplasmic membrane), and thus conserves the redox energy in a proton gradient. The protein is NADH-quinone oxidoreductase subunit B of Paracidovorax citrulli (strain AAC00-1) (Acidovorax citrulli).